Consider the following 401-residue polypeptide: tRNA(Met) cytidine acetate ligase (401 aa).

Residues 7-20 (IVEYNPFHNGHLYH), Gly-101, Asn-160, and 185-186 (RI) each bind ATP.

It belongs to the TmcAL family.

Its subcellular location is the cytoplasm. It carries out the reaction cytidine(34) in elongator tRNA(Met) + acetate + ATP = N(4)-acetylcytidine(34) in elongator tRNA(Met) + AMP + diphosphate. Functionally, catalyzes the formation of N(4)-acetylcytidine (ac(4)C) at the wobble position of elongator tRNA(Met), using acetate and ATP as substrates. First activates an acetate ion to form acetyladenylate (Ac-AMP) and then transfers the acetyl group to tRNA to form ac(4)C34. This is tRNA(Met) cytidine acetate ligase from Geobacillus sp. (strain WCH70).